A 394-amino-acid polypeptide reads, in one-letter code: NAD(P)H-quinone oxidoreductase subunit H (394 aa).

The protein belongs to the complex I 49 kDa subunit family. NDH-1 can be composed of about 15 different subunits; different subcomplexes with different compositions have been identified which probably have different functions. The initiator methionine has been seen to be kept and removed.

It localises to the cellular thylakoid membrane. The enzyme catalyses a plastoquinone + NADH + (n+1) H(+)(in) = a plastoquinol + NAD(+) + n H(+)(out). The catalysed reaction is a plastoquinone + NADPH + (n+1) H(+)(in) = a plastoquinol + NADP(+) + n H(+)(out). In terms of biological role, NDH-1 shuttles electrons from an unknown electron donor, via FMN and iron-sulfur (Fe-S) centers, to quinones in the respiratory and/or the photosynthetic chain. The immediate electron acceptor for the enzyme in this species is believed to be plastoquinone. Couples the redox reaction to proton translocation, and thus conserves the redox energy in a proton gradient. Cyanobacterial NDH-1 also plays a role in inorganic carbon-concentration. In Synechocystis sp. (strain ATCC 27184 / PCC 6803 / Kazusa), this protein is NAD(P)H-quinone oxidoreductase subunit H (ndhH).